The primary structure comprises 669 residues: Glutamate--cysteine ligase (669 aa).

This sequence belongs to the glutamate--cysteine ligase type 3 family. As to quaternary structure, heterodimer of a catalytic heavy chain and a regulatory light chain.

It carries out the reaction L-cysteine + L-glutamate + ATP = gamma-L-glutamyl-L-cysteine + ADP + phosphate + H(+). Its pathway is sulfur metabolism; glutathione biosynthesis; glutathione from L-cysteine and L-glutamate: step 1/2. In terms of biological role, catalyzes the ATP-dependent ligation of L-glutamate and L-cysteine and participates in the first and rate-limiting step in glutathione biosynthesis. The polypeptide is Glutamate--cysteine ligase (gcs1) (Schizosaccharomyces pombe (strain 972 / ATCC 24843) (Fission yeast)).